A 293-amino-acid chain; its full sequence is MELMRARAPAKINLTLRIEGRRADGFHDLASLVAFAGAGDLVFLHPDAPLALEVCGPTAAAAGPDDDNLVLRAARAFAERVPGARLGRFVLEKRLPVAAGLGGGSSDAAAALRLLAGLNGLALDDPRLFAAARATGSDVPVCLDPRARLMRGVGDVLSAPLALPPLSAVLVNCRVAVPTAGVFRALGLAPGAALAGPEHPAGLPETTMGNAAAVCAFLSGLPNDLEPPALALAPEIGRAMALLSEAPEARLVRMSGSGATVFALTDSCRTAASLARRLLAQQPGWWVKPTLLR.

Lys11 is a catalytic residue. Residue 96-106 (PVAAGLGGGSS) coordinates ATP. Asp138 is a catalytic residue.

The protein belongs to the GHMP kinase family. IspE subfamily.

It carries out the reaction 4-CDP-2-C-methyl-D-erythritol + ATP = 4-CDP-2-C-methyl-D-erythritol 2-phosphate + ADP + H(+). The protein operates within isoprenoid biosynthesis; isopentenyl diphosphate biosynthesis via DXP pathway; isopentenyl diphosphate from 1-deoxy-D-xylulose 5-phosphate: step 3/6. In terms of biological role, catalyzes the phosphorylation of the position 2 hydroxy group of 4-diphosphocytidyl-2C-methyl-D-erythritol. The sequence is that of 4-diphosphocytidyl-2-C-methyl-D-erythritol kinase from Xanthobacter autotrophicus (strain ATCC BAA-1158 / Py2).